Reading from the N-terminus, the 527-residue chain is Bifunctional purine biosynthesis protein PurH (527 aa).

The MGS-like domain maps to 1 to 144; sequence MNRRALISVS…KNHESVAIIV (144 aa).

It belongs to the PurH family.

The enzyme catalyses (6R)-10-formyltetrahydrofolate + 5-amino-1-(5-phospho-beta-D-ribosyl)imidazole-4-carboxamide = 5-formamido-1-(5-phospho-D-ribosyl)imidazole-4-carboxamide + (6S)-5,6,7,8-tetrahydrofolate. It catalyses the reaction IMP + H2O = 5-formamido-1-(5-phospho-D-ribosyl)imidazole-4-carboxamide. The protein operates within purine metabolism; IMP biosynthesis via de novo pathway; 5-formamido-1-(5-phospho-D-ribosyl)imidazole-4-carboxamide from 5-amino-1-(5-phospho-D-ribosyl)imidazole-4-carboxamide (10-formyl THF route): step 1/1. Its pathway is purine metabolism; IMP biosynthesis via de novo pathway; IMP from 5-formamido-1-(5-phospho-D-ribosyl)imidazole-4-carboxamide: step 1/1. This chain is Bifunctional purine biosynthesis protein PurH, found in Heliobacterium modesticaldum (strain ATCC 51547 / Ice1).